The primary structure comprises 116 residues: Large ribosomal subunit protein bL17 (116 aa).

This sequence belongs to the bacterial ribosomal protein bL17 family. Part of the 50S ribosomal subunit. Contacts protein L32.

The chain is Large ribosomal subunit protein bL17 from Helicobacter pylori (strain P12).